The sequence spans 128 residues: Large ribosomal subunit protein bL20 (128 aa).

The protein belongs to the bacterial ribosomal protein bL20 family.

Functionally, binds directly to 23S ribosomal RNA and is necessary for the in vitro assembly process of the 50S ribosomal subunit. It is not involved in the protein synthesizing functions of that subunit. The polypeptide is Large ribosomal subunit protein bL20 (Micrococcus luteus (strain ATCC 4698 / DSM 20030 / JCM 1464 / CCM 169 / CCUG 5858 / IAM 1056 / NBRC 3333 / NCIMB 9278 / NCTC 2665 / VKM Ac-2230) (Micrococcus lysodeikticus)).